Here is a 506-residue protein sequence, read N- to C-terminus: Cysteine--tRNA ligase (506 aa).

Cys34 provides a ligand contact to Zn(2+). Residues 36-46 (PTVYDFAHIGN) carry the 'HIGH' region motif. Cys230, His269, and Glu273 together coordinate Zn(2+). Positions 302–306 (KMSKS) match the 'KMSKS' region motif. Residue Lys305 participates in ATP binding.

This sequence belongs to the class-I aminoacyl-tRNA synthetase family. As to quaternary structure, monomer. Requires Zn(2+) as cofactor.

Its subcellular location is the cytoplasm. The enzyme catalyses tRNA(Cys) + L-cysteine + ATP = L-cysteinyl-tRNA(Cys) + AMP + diphosphate. This Brucella melitensis biotype 2 (strain ATCC 23457) protein is Cysteine--tRNA ligase.